We begin with the raw amino-acid sequence, 87 residues long: Candoxin (87 aa).

A signal peptide spans 1–21 (MKTLLLTLVVVTIVCLDLGYT). 5 disulfides stabilise this stretch: Cys24/Cys47, Cys27/Cys32, Cys40/Cys64, Cys68/Cys80, and Cys81/Cys86.

Expressed by the venom gland.

The protein resides in the secreted. Its function is as follows. Binds and inhibits muscular and neuronal nicotinic acetylcholine receptors (nAChR). Is a reversible antagonist of muscle nAChR (alpha-1-beta-1-delta-epsilon/CHRNA1-CHRNB1-CHRND-CHRNE) (IC(50)=10 nM) and a potent and poorly reversible antagonist of the neuronal alpha-7/CHRNA7 nAChR (IC(50)=50 nM). May exhibit differential affinities for the two binding sites on the muscle nAChR. This is Candoxin from Bungarus candidus (Malayan krait).